A 340-amino-acid chain; its full sequence is Formimidoylglutamase (340 aa).

The Mn(2+) site is built by His-129, Asp-160, His-162, Asp-164, Asp-257, and Asp-259.

The protein belongs to the arginase family. Requires Mn(2+) as cofactor.

The enzyme catalyses N-formimidoyl-L-glutamate + H2O = formamide + L-glutamate. Its pathway is amino-acid degradation; L-histidine degradation into L-glutamate; L-glutamate from N-formimidoyl-L-glutamate (hydrolase route): step 1/1. Functionally, catalyzes the conversion of N-formimidoyl-L-glutamate to L-glutamate and formamide. The sequence is that of Formimidoylglutamase from Vibrio parahaemolyticus serotype O3:K6 (strain RIMD 2210633).